Here is a 635-residue protein sequence, read N- to C-terminus: Voltage-gated potassium channel KCNC4 (635 aa).

Residues 1–24 form a disordered region; it reads MISSVCVSSYRGRKSGNKPPSKTC. The tract at residues 1–28 is inactivation gate; sequence MISSVCVSSYRGRKSGNKPPSKTCLKEE. Residues 1–226 are Cytoplasmic-facing; it reads MISSVCVSSY…EDPYSSRAAR (226 aa). Serine 8, serine 9, serine 15, and serine 21 each carry phosphoserine. Positions 116, 122, 143, and 144 each coordinate Zn(2+). The segment at 160–180 is disordered; sequence IFESPDGGGSGAGPSDEAGDD. The helical transmembrane segment at 227–247 threads the bilayer; that stretch reads VVAFASLFFILVSITTFCLET. N-linked (GlcNAc...) asparagine glycans are attached at residues asparagine 256 and asparagine 265. A helical membrane pass occupies residues 278-298; it reads EPILTYIEGVCVLWFTLEFLV. Residues 299-312 are Cytoplasmic-facing; that stretch reads RIVCCPDTLDFVKN. Residues 313-333 traverse the membrane as a helical segment; sequence LLNIIDFVAILPFYLEVGLSG. Residues 345–364 form a helical; Voltage-sensor membrane-spanning segment; the sequence is FLRVVRFVRILRIFKLTRHF. Residues 365 to 380 are Cytoplasmic-facing; it reads VGLRVLGHTLRASTNE. A helical membrane pass occupies residues 381–401; it reads FLLLIIFLALGVLIFATMIYY. K(+) contacts are provided by threonine 436, leucine 437, glycine 438, and tyrosine 439. The short motif at 436-441 is the Selectivity filter element; the sequence is TLGYGD. Residues 452–472 traverse the membrane as a helical segment; it reads VGALCALAGVLTIAMPVPVIV. At 473–635 the chain is on the cytoplasmic side; it reads NNFGMYYSLA…PTAGTLFLPH (163 aa). The tract at residues 490–580 is disordered; sequence KKRKKHVPRP…RRALRRSTTR (91 aa). Residues 527-542 are compositionally biased toward basic and acidic residues; sequence AREEGMIERKRADSKQ.

The protein belongs to the potassium channel family. C (Shaw) (TC 1.A.1.2) subfamily. Kv3.4/KCNC4 sub-subfamily. Homotetramer. Heterotetramer of potassium channel proteins. Post-translationally, phosphorylation of serine residues in the inactivation gate inhibits rapid channel closure.

The protein localises to the membrane. It carries out the reaction K(+)(in) = K(+)(out). In terms of biological role, voltage-gated potassium channel that opens in response to the voltage difference across the membrane, forming a potassium-selective channel through which potassium ions pass in accordance with their electrochemical gradient. The channel displays rapid activation and inactivation kinetics. The polypeptide is Voltage-gated potassium channel KCNC4 (Homo sapiens (Human)).